A 186-amino-acid polypeptide reads, in one-letter code: ADP-ribosylation factor-like protein 6 (186 aa).

Gly2 is lipidated: N-myristoyl glycine. GTP-binding positions include 24–31 (GLDNSGKT), Thr50, 69–73 (DMSGQ), Gly72, 130–133 (NKMD), and Ala164. Residue Thr50 participates in Mg(2+) binding.

It belongs to the small GTPase superfamily. Arf family. As to quaternary structure, interacts with SEC61B, ARL6IP1, ARL6IP2, ARL6IP3, ARL6IP4 ARL6IP5 and ARL6IP6. Interacts (GTP-bound form) with the BBSome a complex that contains BBS1, BBS2, BBS4, BBS5, BBS7, BBS8/TTC8, BBS9 and BBIP10. Interacts (GTP-free form) with IFT27. In terms of tissue distribution, most abundant in brain and kidney. Expressed in heart and eye. Isoform 2 is expressed only in the retina.

The protein resides in the cell projection. Its subcellular location is the cilium membrane. It is found in the cytoplasm. It localises to the cytoskeleton. The protein localises to the cilium axoneme. The protein resides in the cilium basal body. Functionally, involved in membrane protein trafficking at the base of the ciliary organelle. Mediates recruitment onto plasma membrane of the BBSome complex which would constitute a coat complex required for sorting of specific membrane proteins to the primary cilia. Together with BBS1, is necessary for correct trafficking of PKD1 to primary cilia. Together with the BBSome complex and LTZL1, controls SMO ciliary trafficking and contributes to the sonic hedgehog (SHH) pathway regulation. May regulate cilia assembly and disassembly and subsequent ciliary signaling events such as the Wnt signaling cascade. Isoform 2 may be required for proper retinal function and organization. This chain is ADP-ribosylation factor-like protein 6 (Arl6), found in Mus musculus (Mouse).